A 182-amino-acid chain; its full sequence is Keratin, type II cytoskeletal 60 kDa, component III (182 aa).

The 63-residue stretch at 1-63 (ERGELALKDA…KLLEGEECRL (63 aa)) folds into the IF rod domain. The tract at residues 1 to 63 (ERGELALKDA…KLLEGEECRL (63 aa)) is coil 2. The tract at residues 63 to 182 (LSGEGVGPVN…TSSSRKSFKS (120 aa)) is tail. Residues 157–182 (FGSGGGSSSSVKFVSTTSSSRKSFKS) form a disordered region. The span at 164 to 182 (SSSVKFVSTTSSSRKSFKS) shows a compositional bias: low complexity.

It belongs to the intermediate filament family. As to quaternary structure, heterotetramer of two type I and two type II keratins.

This is Keratin, type II cytoskeletal 60 kDa, component III from Bos taurus (Bovine).